Here is a 121-residue protein sequence, read N- to C-terminus: Fluoride-specific ion channel FluC 1 (121 aa).

4 helical membrane-spanning segments follow: residues 3–23 (YVYIFIGGALGALLRYLISFL), 35–55 (IANLTGAFVMGLLTALTIAFF), 64–84 (AITTGFLGALTTFSTFQLELI), and 92–112 (FITLLLYAVTSYVFGILLCYV). Residues Gly71 and Thr74 each coordinate Na(+).

Belongs to the fluoride channel Fluc/FEX (TC 1.A.43) family.

The protein resides in the cell membrane. The catalysed reaction is fluoride(in) = fluoride(out). Na(+) is not transported, but it plays an essential structural role and its presence is essential for fluoride channel function. In terms of biological role, fluoride-specific ion channel. Important for reducing fluoride concentration in the cell, thus reducing its toxicity. This is Fluoride-specific ion channel FluC 1 from Staphylococcus aureus (strain NCTC 8325 / PS 47).